Reading from the N-terminus, the 395-residue chain is Pesticidal crystal protein Cry6Ba (395 aa).

This sequence belongs to the cry6A endotoxin family.

In terms of biological role, endotoxin with nematicidal activity. The sequence is that of Pesticidal crystal protein Cry6Ba (cry6Ba) from Bacillus thuringiensis.